The sequence spans 284 residues: Adenylate kinase 1, chloroplastic (284 aa).

Residues M1–F36 constitute a chloroplast transit peptide. G61–T66 is an ATP binding site. An NMP region spans residues A81 to V110. Residues T82, R87, K108–V110, G138–R141, and Q145 each bind AMP. The tract at residues G174 to D222 is LID. R175 contacts ATP. The AMP site is built by R219 and R230. G258 is an ATP binding site.

This sequence belongs to the adenylate kinase family. Monomer. In terms of tissue distribution, highly expressed in flowers and at lower levels in roots, leaves and stems.

The protein resides in the plastid. The protein localises to the chloroplast stroma. The enzyme catalyses AMP + ATP = 2 ADP. Functionally, catalyzes the reversible transfer of the terminal phosphate group between ATP and AMP. Plays an important role in cellular energy homeostasis, adenine nucleotide metabolism and plant growth. The sequence is that of Adenylate kinase 1, chloroplastic (ADK) from Arabidopsis thaliana (Mouse-ear cress).